The primary structure comprises 237 residues: Probable transcriptional regulatory protein PSHAa1370 (237 aa).

This sequence belongs to the TACO1 family.

It localises to the cytoplasm. The sequence is that of Probable transcriptional regulatory protein PSHAa1370 from Pseudoalteromonas translucida (strain TAC 125).